The following is a 358-amino-acid chain: MKKILALLVIAPLLVSCSGNKNQADNEAFIKDTNGFEILMGQFAHNIENIWGLKEVLIAGPKDYVKYTDQYQTRSHINFDAGTITVETIATTDPAAHLRQAIITTLLMGDDPGSIDLYSDANDIQISKEPFLYGQVLDNNGEPIRWEWRAAHFADYLLQNKMQKRTSGLHVIWSVTLQLVPNHLDKRAHKYLPLVRQSAEKYGVEESLILAIMQTESSFNPYAVSGSDALGLMQVVQHTAGRDVFKMKGKSGQPSRSYLFDPANNIDAGTAYLSILQNTYLGGIQNATSRRYAVITSYNGGAGSVLRVFSSDKNQAVNIINNMAPGDVFQTLTTKHPSGESRRYLVKVNSAQKSYRRH.

The first 16 residues, 1 to 16 (MKKILALLVIAPLLVS), serve as a signal peptide directing secretion. Cys17 carries N-palmitoyl cysteine lipidation. Residue Cys17 is the site of S-diacylglycerol cysteine attachment.

Belongs to the transglycosylase Slt family.

Its subcellular location is the cell outer membrane. It carries out the reaction Exolytic cleavage of the (1-&gt;4)-beta-glycosidic linkage between N-acetylmuramic acid (MurNAc) and N-acetylglucosamine (GlcNAc) residues in peptidoglycan, from either the reducing or the non-reducing ends of the peptidoglycan chains, with concomitant formation of a 1,6-anhydrobond in the MurNAc residue.. Its function is as follows. Murein-degrading enzyme. May play a role in recycling of muropeptides during cell elongation and/or cell division. In Yersinia enterocolitica serotype O:8 / biotype 1B (strain NCTC 13174 / 8081), this protein is Membrane-bound lytic murein transglycosylase C.